A 510-amino-acid polypeptide reads, in one-letter code: Mitochondrial metal transporter 1 (510 aa).

The disordered stretch occupies residues Ala120–His141. A compositionally biased stretch (basic residues) spans Ser130–His141. 6 helical membrane passes run Trp165–Phe185, Ala194–Ala214, Leu241–Ile261, Val286–Phe306, Leu333–Leu353, and Ile356–Ala376.

It belongs to the cation diffusion facilitator (CDF) transporter (TC 2.A.4) family. SLC30A subfamily.

Its subcellular location is the mitochondrion membrane. In terms of biological role, mitochondrial metal transporter involved in mitochondrial iron accumulation. This is Mitochondrial metal transporter 1 (MMT1) from Saccharomyces cerevisiae (strain ATCC 204508 / S288c) (Baker's yeast).